The chain runs to 421 residues: Cyclin-A2 (421 aa).

Methionine 1 carries the N-acetylmethionine modification. Residues 1–60 (MPGSSRQSGREAGSALLSLQQEDQENVNPEKAAPDQRARAALKTGNARGNAPQQRLKARR) are disordered. A Phosphoserine modification is found at serine 5.

Belongs to the cyclin family. Cyclin AB subfamily. Interacts with the CDK1 and CDK2 protein kinases to form serine/threonine kinase holoenzyme complexes. Interacts with CDK1 (hyperphosphorylated form in G1 and underphosphorylated forms in S and G2). Interacts with CDK2; the interaction increases from G1 to G2. Interacts (associated with CDK2 but not with CDK1) with SCAPER; regulates the activity of CCNA2/CDK2 by transiently maintaining CCNA2 in the cytoplasm. Forms a ternary complex with CDK2 and CDKN1B; CDKN1B inhibits the kinase activity of CDK2 through conformational rearrangements. Interacts with INCA1. In terms of processing, polyubiquitinated via 'Lys-11'-linked ubiquitin by the anaphase-promoting complex (APC/C), leading to its degradation by the proteasome. Deubiquitinated and stabilized by USP37 enables entry into S phase. Ubiquitinated during the G1 phase by the SCF(FBXO31) complex, leading to its proteasomal degradation.

Its subcellular location is the nucleus. The protein localises to the cytoplasm. In terms of biological role, cyclin which controls both the G1/S and the G2/M transition phases of the cell cycle. Functions through the formation of specific serine/threonine kinase holoenzyme complexes with the cyclin-dependent protein kinases CDK1 and CDK2. The cyclin subunit confers the substrate specificity of these complexes and differentially interacts with and activates CDK1 and CDK2 throughout the cell cycle. This chain is Cyclin-A2, found in Mesocricetus auratus (Golden hamster).